The following is a 459-amino-acid chain: Chromosomal replication initiator protein DnaA (459 aa).

Residues 1–83 (MKNAREIWRN…NKLEIHFIEE (83 aa)) are domain I, interacts with DnaA modulators. Residues 83–121 (ESQAHKYAPADGSSNESIAVTETKEQPVLLPSKEEGDLG) are domain II. Residues 122 to 338 (QLNDKYIFET…GALTRVVAYA (217 aa)) form a domain III, AAA+ region region. 4 residues coordinate ATP: Gly-166, Gly-168, Lys-169, and Thr-170. The segment at 339–459 (KLVGRPIDPD…IQTLKKALSN (121 aa)) is domain IV, binds dsDNA.

This sequence belongs to the DnaA family. Oligomerizes as a right-handed, spiral filament on DNA at oriC.

The protein resides in the cytoplasm. In terms of biological role, plays an essential role in the initiation and regulation of chromosomal replication. ATP-DnaA binds to the origin of replication (oriC) to initiate formation of the DNA replication initiation complex once per cell cycle. Binds the DnaA box (a 9 base pair repeat at the origin) and separates the double-stranded (ds)DNA. Forms a right-handed helical filament on oriC DNA; dsDNA binds to the exterior of the filament while single-stranded (ss)DNA is stabiized in the filament's interior. The ATP-DnaA-oriC complex binds and stabilizes one strand of the AT-rich DNA unwinding element (DUE), permitting loading of DNA polymerase. After initiation quickly degrades to an ADP-DnaA complex that is not apt for DNA replication. Binds acidic phospholipids. The protein is Chromosomal replication initiator protein DnaA of Exiguobacterium sp. (strain ATCC BAA-1283 / AT1b).